The following is a 110-amino-acid chain: MLEKTTRMNYLFDFYQSLLTQKQRSYMSLYYLDDLSLGEIAEEFDVSRQAVYDNIKRTEAMLEEYEDKLVLLQKFQERQRLVAKLKQLLSEEEHVNEEMKQVVEAIEKLD.

The protein belongs to the UPF0122 family.

In terms of biological role, might take part in the signal recognition particle (SRP) pathway. This is inferred from the conservation of its genetic proximity to ftsY/ffh. May be a regulatory protein. The sequence is that of UPF0122 protein BcerKBAB4_3669 from Bacillus mycoides (strain KBAB4) (Bacillus weihenstephanensis).